The sequence spans 349 residues: Rhodopsin (349 aa).

Topologically, residues 1–33 are extracellular; the sequence is TEGPYFYIPMSNATGIVRSPYEYPQYYLVYPAA. An N-linked (GlcNAc...) asparagine glycan is attached at N12. Residues 34–58 form a helical membrane-spanning segment; it reads YAVLGAYMFFLIIFGFPVNFLTLYV. The Cytoplasmic portion of the chain corresponds to 59–70; the sequence is TIEHKKLRTPLN. A helical transmembrane segment spans residues 71–93; it reads YILLNLAVADLFMVIGGFTTTIY. Over 94 to 107 the chain is Extracellular; that stretch reads TSMHGYFVLGRLGC. Cysteines 107 and 184 form a disulfide. The helical transmembrane segment at 108–130 threads the bilayer; it reads NLEGFSATLGGMIGLWSLVVLAI. The short motif at 131-133 is the 'Ionic lock' involved in activated form stabilization element; that stretch reads ERW. The Cytoplasmic portion of the chain corresponds to 131–149; it reads ERWVVVCKPMSNFRFGENH. A helical transmembrane segment spans residues 150–170; sequence AIMGVTLTWVMGLACTVPPLV. At 171–199 the chain is on the extracellular side; that stretch reads GWSRYIPEGMQCSCGIDYYTRAEGFNNDS. The N-linked (GlcNAc...) asparagine glycan is linked to N197. The helical transmembrane segment at 200–221 threads the bilayer; that stretch reads YVLYMFVCHFLIPLVVIFFCYG. The Cytoplasmic segment spans residues 222–249; sequence RLLCAVKEAAAAQQESETTQRAEREVTR. A helical membrane pass occupies residues 250 to 271; sequence MVILMVIGFLVCWLPYASVAWY. The Extracellular portion of the chain corresponds to 272–283; it reads IFTHQGSEFGPL. The chain crosses the membrane as a helical span at residues 284 to 305; sequence FMTIPAFFAKSSSIYNPVIYIC. K293 carries the post-translational modification N6-(retinylidene)lysine. Residues 306–349 lie on the Cytoplasmic side of the membrane; sequence MNKQFRQCMLTTLFCGKNPFEEEEGASSTKTEASSASSSSVSPA. A lipid anchor (S-palmitoyl cysteine) is attached at C320. A disordered region spans residues 326–349; sequence EEEEGASSTKTEASSASSSSVSPA. The span at 331 to 349 shows a compositional bias: low complexity; that stretch reads ASSTKTEASSASSSSVSPA.

It belongs to the G-protein coupled receptor 1 family. Opsin subfamily. Post-translationally, phosphorylated on some or all of the serine and threonine residues present in the C-terminal region. Contains one covalently linked retinal chromophore.

It localises to the membrane. It is found in the cell projection. The protein localises to the cilium. Its subcellular location is the photoreceptor outer segment. Photoreceptor required for image-forming vision at low light intensity. While most salt water fish species use retinal as chromophore, most freshwater fish use 3-dehydroretinal, or a mixture of retinal and 3-dehydroretinal. Light-induced isomerization of 11-cis to all-trans retinal triggers a conformational change that activates signaling via G-proteins. Subsequent receptor phosphorylation mediates displacement of the bound G-protein alpha subunit by arrestin and terminates signaling. In Myripristis violacea (Lattice soldierfish), this protein is Rhodopsin (rho).